We begin with the raw amino-acid sequence, 331 residues long: 4-hydroxy-3-methylbut-2-enyl diphosphate reductase (331 aa).

A [4Fe-4S] cluster-binding site is contributed by cysteine 12. The (2E)-4-hydroxy-3-methylbut-2-enyl diphosphate site is built by histidine 43 and histidine 81. Dimethylallyl diphosphate-binding residues include histidine 43 and histidine 81. Positions 43 and 81 each coordinate isopentenyl diphosphate. Cysteine 103 contributes to the [4Fe-4S] cluster binding site. Histidine 131 provides a ligand contact to (2E)-4-hydroxy-3-methylbut-2-enyl diphosphate. Histidine 131 is a dimethylallyl diphosphate binding site. Histidine 131 provides a ligand contact to isopentenyl diphosphate. Glutamate 133 serves as the catalytic Proton donor. Position 170 (threonine 170) interacts with (2E)-4-hydroxy-3-methylbut-2-enyl diphosphate. Cysteine 198 is a [4Fe-4S] cluster binding site. The (2E)-4-hydroxy-3-methylbut-2-enyl diphosphate site is built by serine 226, asparagine 228, and serine 271. Residues serine 226, asparagine 228, and serine 271 each contribute to the dimethylallyl diphosphate site. 3 residues coordinate isopentenyl diphosphate: serine 226, asparagine 228, and serine 271.

This sequence belongs to the IspH family. [4Fe-4S] cluster serves as cofactor.

It carries out the reaction isopentenyl diphosphate + 2 oxidized [2Fe-2S]-[ferredoxin] + H2O = (2E)-4-hydroxy-3-methylbut-2-enyl diphosphate + 2 reduced [2Fe-2S]-[ferredoxin] + 2 H(+). It catalyses the reaction dimethylallyl diphosphate + 2 oxidized [2Fe-2S]-[ferredoxin] + H2O = (2E)-4-hydroxy-3-methylbut-2-enyl diphosphate + 2 reduced [2Fe-2S]-[ferredoxin] + 2 H(+). Its pathway is isoprenoid biosynthesis; dimethylallyl diphosphate biosynthesis; dimethylallyl diphosphate from (2E)-4-hydroxy-3-methylbutenyl diphosphate: step 1/1. It participates in isoprenoid biosynthesis; isopentenyl diphosphate biosynthesis via DXP pathway; isopentenyl diphosphate from 1-deoxy-D-xylulose 5-phosphate: step 6/6. In terms of biological role, catalyzes the conversion of 1-hydroxy-2-methyl-2-(E)-butenyl 4-diphosphate (HMBPP) into a mixture of isopentenyl diphosphate (IPP) and dimethylallyl diphosphate (DMAPP). Acts in the terminal step of the DOXP/MEP pathway for isoprenoid precursor biosynthesis. In Listeria monocytogenes serovar 1/2a (strain ATCC BAA-679 / EGD-e), this protein is 4-hydroxy-3-methylbut-2-enyl diphosphate reductase.